A 212-amino-acid chain; its full sequence is Large ribosomal subunit protein bL25 (212 aa).

The interval 181 to 212 (LSEPKEEVIEEDVEEVSADVPTVSETEEEDAE) is disordered. The span at 188–197 (VIEEDVEEVS) shows a compositional bias: acidic residues.

Belongs to the bacterial ribosomal protein bL25 family. CTC subfamily. Part of the 50S ribosomal subunit; part of the 5S rRNA/L5/L18/L25 subcomplex. Contacts the 5S rRNA. Binds to the 5S rRNA independently of L5 and L18.

Functionally, this is one of the proteins that binds to the 5S RNA in the ribosome where it forms part of the central protuberance. The protein is Large ribosomal subunit protein bL25 of Finegoldia magna (strain ATCC 29328 / DSM 20472 / WAL 2508) (Peptostreptococcus magnus).